Here is a 249-residue protein sequence, read N- to C-terminus: Proteasome subunit alpha type-7-B (249 aa).

It belongs to the peptidase T1A family. The 26S proteasome consists of a 20S proteasome core and two 19S regulatory subunits. The 20S proteasome core is composed of 28 subunits that are arranged in four stacked rings, resulting in a barrel-shaped structure. The two end rings are each formed by seven alpha subunits, and the two central rings are each formed by seven beta subunits. The catalytic chamber with the active sites is on the inside of the barrel.

Its subcellular location is the cytoplasm. The protein localises to the nucleus. Its function is as follows. The proteasome is a multicatalytic proteinase complex which is characterized by its ability to cleave peptides with Arg, Phe, Tyr, Leu, and Glu adjacent to the leaving group at neutral or slightly basic pH. The proteasome has an ATP-dependent proteolytic activity. The chain is Proteasome subunit alpha type-7-B (PAD1) from Oryza sativa subsp. indica (Rice).